Here is a 495-residue protein sequence, read N- to C-terminus: 3-octaprenyl-4-hydroxybenzoate carboxy-lyase (495 aa).

Asn-172 contributes to the Mn(2+) binding site. Prenylated FMN contacts are provided by residues Ile-175–Arg-177, Arg-189–Leu-191, and Arg-194–Gly-195. Glu-238 serves as a coordination point for Mn(2+). Asp-287 acts as the Proton donor in catalysis.

It belongs to the UbiD family. In terms of assembly, homohexamer. Prenylated FMN is required as a cofactor. Requires Mn(2+) as cofactor.

The protein resides in the cell membrane. The enzyme catalyses a 4-hydroxy-3-(all-trans-polyprenyl)benzoate + H(+) = a 2-(all-trans-polyprenyl)phenol + CO2. It participates in cofactor biosynthesis; ubiquinone biosynthesis. Its function is as follows. Catalyzes the decarboxylation of 3-octaprenyl-4-hydroxy benzoate to 2-octaprenylphenol, an intermediate step in ubiquinone biosynthesis. This chain is 3-octaprenyl-4-hydroxybenzoate carboxy-lyase, found in Yersinia enterocolitica serotype O:8 / biotype 1B (strain NCTC 13174 / 8081).